The following is a 351-amino-acid chain: tRNA-specific 2-thiouridylase MnmA 2 (351 aa).

ATP-binding positions include 13–20 (GMSGGTDS) and F39. Catalysis depends on C98, which acts as the Nucleophile. Cysteines 98 and 195 form a disulfide. G122 contacts ATP. The segment at 144–146 (KDQ) is interaction with tRNA. C195 functions as the Cysteine persulfide intermediate in the catalytic mechanism. The interval 301–302 (RY) is interaction with tRNA.

It belongs to the MnmA/TRMU family.

The protein localises to the cytoplasm. The catalysed reaction is S-sulfanyl-L-cysteinyl-[protein] + uridine(34) in tRNA + AH2 + ATP = 2-thiouridine(34) in tRNA + L-cysteinyl-[protein] + A + AMP + diphosphate + H(+). Functionally, catalyzes the 2-thiolation of uridine at the wobble position (U34) of tRNA, leading to the formation of s(2)U34. This Phocaeicola vulgatus (strain ATCC 8482 / DSM 1447 / JCM 5826 / CCUG 4940 / NBRC 14291 / NCTC 11154) (Bacteroides vulgatus) protein is tRNA-specific 2-thiouridylase MnmA 2.